The primary structure comprises 89 residues: MATHKSAEKRSRQIEKRRIRNVSIRSKVKTYIKSVLTAIEAKDKEGAQSALQQAIPVIAKAGAKGVYHQKTASRHISRLTRKVNAQVAE.

It belongs to the bacterial ribosomal protein bS20 family.

Functionally, binds directly to 16S ribosomal RNA. This Syntrophus aciditrophicus (strain SB) protein is Small ribosomal subunit protein bS20.